We begin with the raw amino-acid sequence, 180 residues long: Epididymal-specific lipocalin-6 (180 aa).

An N-terminal signal peptide occupies residues 1–20 (MGGLLLAALLALVAVPRAQA). A disulfide bridge links C81 with C174.

Belongs to the calycin superfamily. Lipocalin family.

The protein resides in the secreted. May play a role in male fertility. In Macaca mulatta (Rhesus macaque), this protein is Epididymal-specific lipocalin-6 (LCN6).